The chain runs to 345 residues: N-glycosylase/DNA lyase (345 aa).

Residues Asn149, Arg154, and Arg204 each contribute to the DNA site. The active-site Schiff-base intermediate with DNA is the Lys249. Residues Pro266 and Asp268 each coordinate 8-oxoguanine. Positions 270 and 287 each coordinate DNA. Residues Gln315 and Phe319 each contribute to the 8-oxoguanine site.

This sequence belongs to the type-1 OGG1 family. In terms of tissue distribution, highest expression in testis.

It localises to the nucleus. It is found in the nucleoplasm. The protein localises to the nucleus speckle. Its subcellular location is the nucleus matrix. The catalysed reaction is 2'-deoxyribonucleotide-(2'-deoxyribose 5'-phosphate)-2'-deoxyribonucleotide-DNA = a 3'-end 2'-deoxyribonucleotide-(2,3-dehydro-2,3-deoxyribose 5'-phosphate)-DNA + a 5'-end 5'-phospho-2'-deoxyribonucleoside-DNA + H(+). DNA repair enzyme that incises DNA at 8-oxoG residues. Excises 7,8-dihydro-8-oxoguanine and 2,6-diamino-4-hydroxy-5-N-methylformamidopyrimidine (FAPY) from damaged DNA. Has a beta-lyase activity that nicks DNA 3' to the lesion. This chain is N-glycosylase/DNA lyase (Ogg1), found in Mus musculus (Mouse).